Here is a 255-residue protein sequence, read N- to C-terminus: Flap endonuclease Xni (255 aa).

Residue D105 coordinates Mg(2+). In terms of domain architecture, 5'-3' exonuclease spans E162–P253. L172, A173, P181, V183, and I186 together coordinate K(+). The tract at residues G185–S190 is interaction with DNA.

The protein belongs to the Xni family. Mg(2+) is required as a cofactor. K(+) serves as cofactor.

In terms of biological role, has flap endonuclease activity. During DNA replication, flap endonucleases cleave the 5'-overhanging flap structure that is generated by displacement synthesis when DNA polymerase encounters the 5'-end of a downstream Okazaki fragment. The sequence is that of Flap endonuclease Xni from Shewanella sediminis (strain HAW-EB3).